Consider the following 596-residue polypeptide: Mitoguardin 2 (596 aa).

The next 2 helical transmembrane spans lie at 11-31 and 40-60; these read IMQA…STFG and LSPS…ALAL. Disordered regions lie at residues 67 to 158 and 576 to 596; these read RRGR…AAWE and ALPK…GQQD. The segment covering 110 to 123 has biased composition (polar residues); the sequence is MSPSTRSNDTLSGV. A compositionally biased stretch (low complexity) spans 124 to 140; the sequence is SSIAQSKHSSSSHSIAS. 2 stretches are compositionally biased toward polar residues: residues 143 to 152 and 583 to 596; these read VPSSPNQSVN and QAES…GQQD.

It belongs to the mitoguardin family. In terms of assembly, homodimer and heterodimer; forms heterodimers with miga1.

It localises to the mitochondrion outer membrane. Its function is as follows. Regulator of mitochondrial fusion: acts by forming homo- and heterodimers at the mitochondrial outer membrane and facilitating the formation of pld6/MitoPLD dimers. May act by regulating phospholipid metabolism via pld6/MitoPLD. In Danio rerio (Zebrafish), this protein is Mitoguardin 2.